A 55-amino-acid chain; its full sequence is Potassium channel toxin alpha-KTx 17.1 (55 aa).

The signal sequence occupies residues 1-23; that stretch reads MKFIIVLILISVLIATIVPVNEA. At Gln24 the chain carries Pyrrolidone carboxylic acid. Cystine bridges form between Cys27–Cys43, Cys33–Cys48, and Cys37–Cys50. Thr53 carries the threonine amide modification.

Belongs to the short scorpion toxin superfamily. Potassium channel inhibitor family. Alpha-KTx 17 subfamily. In terms of tissue distribution, expressed by the venom gland.

The protein resides in the secreted. In terms of biological role, blocker of potassium channels, which inhibits both the delayed rectifier and fast transient potassium current. The inhibition is reversible and voltage-independent. It causes a depolarizing shift of the steady-state activation curve of the currents, without changing their steady-state inactivation behavior. In Olivierus martensii (Manchurian scorpion), this protein is Potassium channel toxin alpha-KTx 17.1.